A 180-amino-acid polypeptide reads, in one-letter code: Cytidylate kinase (180 aa).

7 to 15 (GPPGSGKST) provides a ligand contact to ATP.

Belongs to the cytidylate kinase family. Type 2 subfamily.

It localises to the cytoplasm. The enzyme catalyses CMP + ATP = CDP + ADP. It carries out the reaction dCMP + ATP = dCDP + ADP. The polypeptide is Cytidylate kinase (Sulfurisphaera tokodaii (strain DSM 16993 / JCM 10545 / NBRC 100140 / 7) (Sulfolobus tokodaii)).